The following is a 622-amino-acid chain: Putative DEAD-box ATP-dependent RNA helicase 44 (622 aa).

The interval 50–97 (DRRSIVQISRSNSDNDDGNRPRDVKRERHRSHDHDRNRESDREFRERE) is disordered. Over residues 66–97 (DGNRPRDVKRERHRSHDHDRNRESDREFRERE) the composition is skewed to basic and acidic residues. Positions 241-436 (IPLGLEQRDV…RKFLRNPVVV (196 aa)) constitute a Helicase ATP-binding domain. Position 254–261 (254–261 (SATGSGKT)) interacts with ATP. Residues 367–370 (DEAD) carry the DEAD box motif. The region spanning 460-606 (RLKKLIDDLG…LVPPELARHE (147 aa)) is the Helicase C-terminal domain.

Belongs to the DEAD box helicase family. DDX23/PRP28 subfamily.

The enzyme catalyses ATP + H2O = ADP + phosphate + H(+). The protein is Putative DEAD-box ATP-dependent RNA helicase 44 (RH44) of Arabidopsis thaliana (Mouse-ear cress).